Reading from the N-terminus, the 289-residue chain is Diaminopimelate epimerase (289 aa).

Residues Asn13, Gln47, and Asn67 each coordinate substrate. Cys76 serves as the catalytic Proton donor. Substrate-binding positions include Gly77–Asn78, Asn167, Asn200, and Glu218–Arg219. Cys227 serves as the catalytic Proton acceptor. Gly228 to Thr229 contacts substrate.

The protein belongs to the diaminopimelate epimerase family. Homodimer.

The protein localises to the cytoplasm. The catalysed reaction is (2S,6S)-2,6-diaminopimelate = meso-2,6-diaminopimelate. Its pathway is amino-acid biosynthesis; L-lysine biosynthesis via DAP pathway; DL-2,6-diaminopimelate from LL-2,6-diaminopimelate: step 1/1. Its function is as follows. Catalyzes the stereoinversion of LL-2,6-diaminopimelate (L,L-DAP) to meso-diaminopimelate (meso-DAP), a precursor of L-lysine and an essential component of the bacterial peptidoglycan. In Burkholderia mallei (strain NCTC 10247), this protein is Diaminopimelate epimerase.